The sequence spans 308 residues: Mitochondrial import receptor subunit TOM40B (308 aa).

The tract at residues 1–29 is disordered; the sequence is MGNTLGLAPMGTLPRRSHRREEPLPNPGS. The required for mitochondrial targeting stretch occupies residues 281–308; the sequence is PLPVTLALGAFLNHWRNRFHCGFSITVG.

It belongs to the Tom40 family. In terms of assembly, forms part of the preprotein translocase of the outer mitochondrial membrane (TOM complex) containing TOMM22, TOMM40, TOMM40L and TOMM70. Interacts with mitochondrial targeting sequences.

The protein localises to the mitochondrion outer membrane. Its function is as follows. Potential channel-forming protein implicated in import of protein precursors into mitochondria. This chain is Mitochondrial import receptor subunit TOM40B (Tomm40l), found in Mus musculus (Mouse).